Consider the following 239-residue polypeptide: MKNDVISPEFDENGRPLRRIRSFVRRQGRLTKGQEHALENYWPVMGVEFSEAPVDFATLFGREAPVTLEIGFGMGASLVAMAKARPEQNFLGIEVHSPGVGACLASANEEGVENLRVMCHDAVEVLHKMIPDNSLSMVQLFFPDPWHKARHNKRRIVQVPFAELVLSKLKLGGVFHMATDWEAYAEHMLEVMSSIDGYKNLSESNDYVPRPESRPVTKFEQRGHRLGHGVWDLMFERVK.

4 residues coordinate S-adenosyl-L-methionine: glutamate 69, glutamate 94, aspartate 121, and aspartate 144. Aspartate 144 is an active-site residue. Substrate is bound at residue lysine 148. The interaction with RNA stretch occupies residues 150-155 (RHNKRR). Residues aspartate 180 and 217–220 (TKFE) each bind substrate.

It belongs to the class I-like SAM-binding methyltransferase superfamily. TrmB family. In terms of assembly, monomer.

It carries out the reaction guanosine(46) in tRNA + S-adenosyl-L-methionine = N(7)-methylguanosine(46) in tRNA + S-adenosyl-L-homocysteine. It participates in tRNA modification; N(7)-methylguanine-tRNA biosynthesis. In terms of biological role, catalyzes the formation of N(7)-methylguanine at position 46 (m7G46) in tRNA. This Salmonella typhimurium (strain LT2 / SGSC1412 / ATCC 700720) protein is tRNA (guanine-N(7)-)-methyltransferase.